A 158-amino-acid chain; its full sequence is 6,7-dimethyl-8-ribityllumazine synthase (158 aa).

Residues Phe23, 61 to 63 (SME), and 85 to 87 (AVI) each bind 5-amino-6-(D-ribitylamino)uracil. A (2S)-2-hydroxy-3-oxobutyl phosphate-binding site is contributed by 90-91 (DT). His93 functions as the Proton donor in the catalytic mechanism. Position 118 (Tyr118) interacts with 5-amino-6-(D-ribitylamino)uracil. Arg132 contributes to the (2S)-2-hydroxy-3-oxobutyl phosphate binding site.

The protein belongs to the DMRL synthase family.

It catalyses the reaction (2S)-2-hydroxy-3-oxobutyl phosphate + 5-amino-6-(D-ribitylamino)uracil = 6,7-dimethyl-8-(1-D-ribityl)lumazine + phosphate + 2 H2O + H(+). It functions in the pathway cofactor biosynthesis; riboflavin biosynthesis; riboflavin from 2-hydroxy-3-oxobutyl phosphate and 5-amino-6-(D-ribitylamino)uracil: step 1/2. Functionally, catalyzes the formation of 6,7-dimethyl-8-ribityllumazine by condensation of 5-amino-6-(D-ribitylamino)uracil with 3,4-dihydroxy-2-butanone 4-phosphate. This is the penultimate step in the biosynthesis of riboflavin. This chain is 6,7-dimethyl-8-ribityllumazine synthase, found in Prochlorococcus marinus (strain MIT 9211).